The chain runs to 366 residues: NADH-quinone oxidoreductase subunit D (366 aa).

The protein belongs to the complex I 49 kDa subunit family. As to quaternary structure, NDH-1 is composed of 14 different subunits. Subunits NuoB, C, D, E, F, and G constitute the peripheral sector of the complex.

The protein localises to the cell membrane. It carries out the reaction a quinone + NADH + 5 H(+)(in) = a quinol + NAD(+) + 4 H(+)(out). In terms of biological role, NDH-1 shuttles electrons from NADH, via FMN and iron-sulfur (Fe-S) centers, to quinones in the respiratory chain. The immediate electron acceptor for the enzyme in this species is believed to be a menaquinone. Couples the redox reaction to proton translocation (for every two electrons transferred, four hydrogen ions are translocated across the cytoplasmic membrane), and thus conserves the redox energy in a proton gradient. The polypeptide is NADH-quinone oxidoreductase subunit D (Bacillus cereus (strain ATCC 14579 / DSM 31 / CCUG 7414 / JCM 2152 / NBRC 15305 / NCIMB 9373 / NCTC 2599 / NRRL B-3711)).